Here is a 189-residue protein sequence, read N- to C-terminus: ECF RNA polymerase sigma-E factor (189 aa).

The binds RNAP core stretch occupies residues 1–153 (MAEQLTDQAL…TAITLRELEG (153 aa)). The interval 25 to 92 (LVSRYQNKVA…KNYLTAQGRR (68 aa)) is sigma-70 factor domain-2. The Polymerase core binding motif lies at 48 to 61 (DVVQESFIKAYRSI). The interval 129 to 180 (RIVFDTIHNLPEDLKTAITLRELEGLSYEDIAEIMDCPVGTVRSRIFRAREM) is sigma-70 factor domain-4. The segment at residues 156–175 (YEDIAEIMDCPVGTVRSRIF) is a DNA-binding region (H-T-H motif).

It belongs to the sigma-70 factor family. ECF subfamily. As to quaternary structure, interacts transiently with the RNAP catalytic core formed by RpoA, RpoB, RpoC and RpoZ (2 alpha, 1 beta, 1 beta' and 1 omega subunit) to form the RNAP holoenzyme that can initiate transcription. Interacts 1:1 with anti-sigma-E factor RseA which prevents binding to RNAP catalytic core.

Its subcellular location is the cytoplasm. ECF sigma-E is held in an inactive form by its cognate anti-sigma factor (RseA) until released by regulated intramembrane proteolysis (RIP). RIP occurs when an extracytoplasmic signal (periplasmic stress and excess LPS) triggers a concerted proteolytic cascade to transmit information and elicit cellular responses. The anti-sigma factor RseA is an inner membrane protein, binding sigma-E in the cytoplasm and RseB in the periplasm. RseA is first cut extracytoplasmically (site-1 protease, S1P, by DegS), then within the membrane itself (site-2 protease, S2P, by RseP), while cytoplasmic proteases (predominantly ClpX-ClpP) finish degrading the regulatory protein, liberating sigma-E. Degradation of RseA requires 2 signals to activate DegS; an outer membrane protein (OMP) signal activates DegS, while an LPS signal causes release of RseB from RseA, freeing RseA to be cleaved. Functionally, sigma factors are initiation factors that promote the attachment of RNA polymerase (RNAP) to specific initiation sites and are then released. Extracytoplasmic function (ECF) sigma-E controls the envelope stress response, responding to periplasmic protein stress, increased levels of periplasmic lipopolysaccharide (LPS) as well as heat shock and oxidative stress; it controls protein processing in the extracytoplasmic compartment. This chain is ECF RNA polymerase sigma-E factor (rpoE), found in Haemophilus influenzae (strain ATCC 51907 / DSM 11121 / KW20 / Rd).